The chain runs to 348 residues: Phosphoribosylformylglycinamidine cyclo-ligase (348 aa).

The protein belongs to the AIR synthase family.

Its subcellular location is the cytoplasm. It carries out the reaction 2-formamido-N(1)-(5-O-phospho-beta-D-ribosyl)acetamidine + ATP = 5-amino-1-(5-phospho-beta-D-ribosyl)imidazole + ADP + phosphate + H(+). It functions in the pathway purine metabolism; IMP biosynthesis via de novo pathway; 5-amino-1-(5-phospho-D-ribosyl)imidazole from N(2)-formyl-N(1)-(5-phospho-D-ribosyl)glycinamide: step 2/2. The chain is Phosphoribosylformylglycinamidine cyclo-ligase from Geobacter sulfurreducens (strain ATCC 51573 / DSM 12127 / PCA).